The primary structure comprises 177 residues: Putative membrane protein 165 (177 aa).

Residues 1–7 lie on the Intravirion side of the membrane; the sequence is MYLVLLI. The chain crosses the membrane as a helical span at residues 8–24; that stretch reads AVILFIIVILMIFLISG. Residues 25-166 are Virion surface-facing; that stretch reads LFYPEQEPAL…DPHPALKSKN (142 aa).

Belongs to the asfivirus envelope protein p22 family.

It localises to the virion membrane. The protein resides in the host cell membrane. This chain is Putative membrane protein 165, found in African swine fever virus (isolate Pig/Kenya/KEN-50/1950) (ASFV).